An 884-amino-acid polypeptide reads, in one-letter code: Pyruvate, phosphate dikinase (884 aa).

Residues 1 to 351 form an N-terminal region; it reads MSTRRVYFFG…LWMLQARAGK (351 aa). Arg99 serves as a coordination point for ATP. The tract at residues 352–408 is linker 1; sequence RTGFAMVRIAIDMCKEGMLTEEEALLRIDANKINEFLFKRFDPSVKPVVLGKGIPAS. Residues 409–507 form a central region; that stretch reads PGAAVGVICF…KFKEGDFISI (99 aa). Position 462 is a phosphothreonine; by PDRP1 (Thr462). His464 serves as the catalytic Tele-phosphohistidine intermediate. A linker 2 region spans residues 508 to 542; it reads NGTTGEIYNGAVQTIEPGITDDLQTIMDWSDKYRV. The tract at residues 543–884 is C-terminal; it reads LKIRTNADTP…IAAIKARTNQ (342 aa). The substrate site is built by Arg570, Arg626, Glu753, Gly774, Thr775, Asn776, and Asp777. Mg(2+) is bound at residue Glu753. Asp777 lines the Mg(2+) pocket. Catalysis depends on Cys839, which acts as the Proton donor.

The protein belongs to the PEP-utilizing enzyme family. Homodimer. It depends on Mg(2+) as a cofactor. In terms of processing, phosphorylation of Thr-462 in the dark inactivates the enzyme. Dephosphorylation upon light stimulation reactivates the enzyme.

The enzyme catalyses pyruvate + phosphate + ATP = phosphoenolpyruvate + AMP + diphosphate + H(+). Its activity is regulated as follows. Activated by light-induced dephosphorylation. Inhibited by dark-induced phosphorylation. Both reactions are catalyzed by PDRP1. In terms of biological role, catalyzes the reversible phosphorylation of pyruvate and phosphate. The sequence is that of Pyruvate, phosphate dikinase from Giardia intestinalis (Giardia lamblia).